The following is a 409-amino-acid chain: Peptidase T (409 aa).

Zn(2+) is bound at residue H78. The active site involves D80. Zn(2+) is bound at residue D140. E173 serves as the catalytic Proton acceptor. Positions 174, 196, and 379 each coordinate Zn(2+).

The protein belongs to the peptidase M20B family. Zn(2+) is required as a cofactor.

Its subcellular location is the cytoplasm. The enzyme catalyses Release of the N-terminal residue from a tripeptide.. In terms of biological role, cleaves the N-terminal amino acid of tripeptides. This is Peptidase T from Salmonella paratyphi C (strain RKS4594).